The following is a 171-amino-acid chain: Ribosome maturation factor RimM (171 aa).

Residues 96 to 170 (AEGEYYYHEI…LVTIHVMEGL (75 aa)) enclose the PRC barrel domain.

The protein belongs to the RimM family. Binds ribosomal protein uS19.

The protein localises to the cytoplasm. Functionally, an accessory protein needed during the final step in the assembly of 30S ribosomal subunit, possibly for assembly of the head region. Essential for efficient processing of 16S rRNA. May be needed both before and after RbfA during the maturation of 16S rRNA. It has affinity for free ribosomal 30S subunits but not for 70S ribosomes. The chain is Ribosome maturation factor RimM from Bacillus cereus (strain G9842).